The primary structure comprises 56 residues: Large ribosomal subunit protein bL33 (56 aa).

It belongs to the bacterial ribosomal protein bL33 family.

The sequence is that of Large ribosomal subunit protein bL33 from Ehrlichia canis (strain Jake).